Reading from the N-terminus, the 713-residue chain is Phenylalanine ammonia-lyase (713 aa).

Residue Tyr116 is the Proton donor/acceptor of the active site. A cross-link (5-imidazolinone (Ala-Gly)) is located at residues 217–219; that stretch reads ASG. Ser218 bears the 2,3-didehydroalanine (Ser) mark. (E)-cinnamate is bound by residues Asn272, Gln362, Arg368, Asn399, Lys470, Glu498, and Asn501.

This sequence belongs to the PAL/histidase family. In terms of assembly, homotetramer. Post-translationally, contains an active site 4-methylidene-imidazol-5-one (MIO), which is formed autocatalytically by cyclization and dehydration of residues Ala-Ser-Gly.

The protein resides in the cytoplasm. It carries out the reaction L-phenylalanine = (E)-cinnamate + NH4(+). It participates in phenylpropanoid metabolism; trans-cinnamate biosynthesis; trans-cinnamate from L-phenylalanine: step 1/1. Catalyzes the non-oxidative deamination of L-phenylalanine to form trans-cinnamic acid and a free ammonium ion. Facilitates the commitment step in phenylpropanoid pathways that produce secondary metabolites such as lignins, coumarins and flavonoids. The chain is Phenylalanine ammonia-lyase (PAL) from Rhodotorula mucilaginosa (Yeast).